The chain runs to 506 residues: 26S proteasome non-ATPase regulatory subunit 5 (506 aa).

Belongs to the proteasome subunit S5B/HSM3 family. As to quaternary structure, interacts with PI31; this interaction is increased by PI31 ADP-ribosylation. Interacts with Rpt2.

Functionally, acts as a chaperone during the assembly of the 26S proteasome. This Drosophila melanogaster (Fruit fly) protein is 26S proteasome non-ATPase regulatory subunit 5.